Here is a 698-residue protein sequence, read N- to C-terminus: MQDDLLMDKSKTQPQPQQQQRQQQQPQPESSVSEAPSTPLSSETPKPEENSAVPALSPAAAPPAPNGPDKMQMESPLLPGLSFHQPPQQPPPPQEPAAPGASLSPSFGSTWSTGTTNAVEDSFFQGITPVNGTMLFQNFPHHVNPVFGGTFSPQIGLAQTQHHQQPPPPAPAPQPAQPAQPPQAQPPQQRRSPASPSQAPYAQRSAAAAYGHQPIMTSKPSSSSAVAAAAAAAAASSASSSWNTHQSVNAAWSAPSNPWGGLQAGRDPRRAVGVGVGVGVGVPSPLNPISPLKKPFSSNVIAPPKFPRAAPLTSKSWMEDNAFRTDNGNNLLPFQDRSRPYDTFNLHSLENSLMDMIRTDHEPLKGKHYPPSGPPMSFADIMWRNHFAGRMGINFHHPGTDNIMALNNAFLDDSHGDQALSSGLSSPTRCQNGERVERYSRKVFVGGLPPDIDEDEITASFRRFGPLVVDWPHKAESKSYFPPKGYAFLLFQEESSVQALIDACLEEDGKLYLCVSSPTIKDKPVQIRPWNLSDSDFVMDGSQPLDPRKTIFVGGVPRPLRAVELAMIMDRLYGGVCYAGIDTDPELKYPKGAGRVAFSNQQSYIAAISARFVQLQHNDIDKRVEVKPYVLDDQMCDECQGTRCGGKFAPFFCANVTCLQYYCEYCWASIHSRAGREFHKPLVKEGGDRPRHVPFRWS.

Positions 1–11 are enriched in basic and acidic residues; sequence MQDDLLMDKSK. Disordered stretches follow at residues 1–114 and 158–208; these read MQDD…WSTG and AQTQ…SAAA. Residues 13–28 are compositionally biased toward low complexity; sequence QPQPQQQQRQQQQPQP. Residues 29 to 44 are compositionally biased toward polar residues; sequence ESSVSEAPSTPLSSET. Pro residues predominate over residues 87–96; sequence PQQPPPPQEP. The span at 103 to 114 shows a compositional bias: polar residues; that stretch reads LSPSFGSTWSTG. Positions 165–185 are enriched in pro residues; sequence QPPPPAPAPQPAQPAQPPQAQ. Over residues 186-208 the composition is skewed to low complexity; that stretch reads PPQQRRSPASPSQAPYAQRSAAA. Serine 192, serine 195, and serine 290 each carry phosphoserine. The residue at position 308 (arginine 308) is an Asymmetric dimethylarginine. RRM domains are found at residues 441–532 and 549–631; these read RKVF…PWNL and KTIF…PYVL.

Belongs to the RRM CPEB family. As to quaternary structure, following synaptic activity, forms amyloid-like oligomers. Aggregation requires an intact actin cytoskeleton. Interacts with STAT5B; this inhibits STAT5B-mediated transcriptional activation. Interacts with E3 ubiquitin-protein ligase NEURL1; this leads to monoubiquitination and activation of CPEB3. Interacts with CAPN2; this leads to cleavage of CPEB3. Interacts (via C-terminal RNA-binding region) with TOB1; TOB1 also binds CNOT7/CAF1 and recruits it to CPEB3 to form a ternary complex. Interacts with SUMO-conjugating enzyme UBC9. Interacts with IPO5; the interaction is enhanced in a RAN-regulated manner following neuronal stimulation and mediates CPEB3 nuclear import. Interacts with exportin XPO1/CRM1. Post-translationally, activated by NEURL1-mediated monoubiquitination, resulting in the growth of new dendritic spines and increased levels of GRIA1 and GRIA2. NEURL1-mediated monoubiquitination facilitates synaptic plasticity and hippocampal-dependent memory storage. In terms of processing, under basal unstimulated conditions when CPEB3 is mainly unaggregated, sumoylated and acts as a translational repressor. Following neuronal stimulation, becomes desumoylated and aggregated which is required for the translation of mRNA targets and for dendritic filopodia formation. Following neuronal stimulation, cleaved by CAPN2 which abolishes its translational repressor activity, leading to translation of CPEB3 target mRNAs. Post-translationally, phosphorylation is enhanced by neuronal stimulation.

It localises to the cytoplasm. The protein localises to the nucleus. Its subcellular location is the synapse. It is found in the cell projection. The protein resides in the dendrite. It localises to the postsynaptic density. Its function is as follows. Sequence-specific RNA-binding protein which acts as a translational repressor in the basal unstimulated state but, following neuronal stimulation, acts as a translational activator. In contrast to CPEB1, does not bind to the cytoplasmic polyadenylation element (CPE), a uridine-rich sequence element within the mRNA 3'-UTR, but binds to a U-rich loop within a stem-loop structure. Required for the consolidation and maintenance of hippocampal-based long term memory. In the basal state, binds to the mRNA 3'-UTR of the glutamate receptors GRIA2/GLUR2 mRNA and negatively regulates their translation. Also represses the translation of DLG4, GRIN1, GRIN2A and GRIN2B. When activated, acts as a translational activator of GRIA1 and GRIA2. In the basal state, suppresses SUMO2 translation but activates it following neuronal stimulation. Binds to the 3'-UTR of TRPV1 mRNA and represses TRPV1 translation which is required to maintain normal thermoception. Binds actin mRNA, leading to actin translational repression in the basal state and to translational activation following neuronal stimulation. Negatively regulates target mRNA levels by binding to TOB1 which recruits CNOT7/CAF1 to a ternary complex and this leads to target mRNA deadenylation and decay. In addition to its role in translation, binds to and inhibits the transcriptional activation activity of STAT5B without affecting its dimerization or DNA-binding activity. This, in turn, represses transcription of the STAT5B target gene EGFR which has been shown to play a role in enhancing learning and memory performance. In contrast to CPEB1, CPEB2 and CPEB4, not required for cell cycle progression. The sequence is that of Cytoplasmic polyadenylation element-binding protein 3 (CPEB3) from Homo sapiens (Human).